The sequence spans 364 residues: Caveolae-associated protein 4 (364 aa).

A disordered region spans residues 1–24 (MEHNGSASNADKIHQNRLSSVTED). A coiled-coil region spans residues 44-77 (VDSVQASQKRIEERHREMENAIKSVQIDLLKLSQ). 2 positions are modified to phosphoserine: Ser-172 and Ser-173. Residues 202–226 (FSKENMQKTRQNLDKKVNRIRTRIV) are a coiled coil. Residues 231 to 256 (RERLRQSGERLRQSGERLRQSGERFK) are compositionally biased toward basic and acidic residues. 2 disordered regions span residues 231 to 283 (RERL…RTVA) and 311 to 339 (SDEL…TPEP). Tyr-326 bears the Phosphotyrosine mark. Thr-336 is subject to Phosphothreonine. At Ser-355 the chain carries Phosphoserine.

It belongs to the CAVIN family. Component of the CAVIN complex composed of CAVIN1, CAVIN2, CAVIN3 and CAVIN4. Interacts with CAVIN1, ADRA1A and ADRA1B. Interacts with CAVIN2; this augments the transactivation of NPPA. Interacts with CAV3. Interacts with MAPK1 and MAPK3.

The protein resides in the cytoplasm. The protein localises to the myofibril. Its subcellular location is the sarcomere. It is found in the cytosol. It localises to the cell membrane. The protein resides in the sarcolemma. The protein localises to the membrane. Its subcellular location is the caveola. In terms of biological role, modulates the morphology of formed caveolae in cardiomyocytes, but is not required for caveolar formation. Facilitates the recruitment of MAPK1/3 to caveolae within cardiomyocytes and regulates alpha-1 adrenergic receptor-induced hypertrophic responses in cardiomyocytes through MAPK1/3 activation. Contributes to proper membrane localization and stabilization of caveolin-3 (CAV3) in cardiomyocytes. Induces RHOA activation and activates NPPA transcription and myofibrillar organization through the Rho/ROCK signaling pathway. In Homo sapiens (Human), this protein is Caveolae-associated protein 4.